The primary structure comprises 106 residues: L-rhamnose mutarotase (106 aa).

Position 20 (Tyr20) interacts with substrate. The Proton donor role is filled by His24. Substrate-binding positions include Tyr43 and 78–79 (WW).

This sequence belongs to the rhamnose mutarotase family. In terms of assembly, homodimer.

The protein resides in the cytoplasm. It catalyses the reaction alpha-L-rhamnose = beta-L-rhamnose. The protein operates within carbohydrate degradation; L-rhamnose degradation. Its function is as follows. Involved in the anomeric conversion of L-rhamnose. This is L-rhamnose mutarotase (rhaM) from Rhizobium leguminosarum bv. trifolii.